A 251-amino-acid polypeptide reads, in one-letter code: Hydroxyacylglutathione hydrolase (251 aa).

Positions 53, 55, 57, 58, 110, 127, and 165 each coordinate Zn(2+).

Belongs to the metallo-beta-lactamase superfamily. Glyoxalase II family. Monomer. Requires Zn(2+) as cofactor.

It carries out the reaction an S-(2-hydroxyacyl)glutathione + H2O = a 2-hydroxy carboxylate + glutathione + H(+). Its pathway is secondary metabolite metabolism; methylglyoxal degradation; (R)-lactate from methylglyoxal: step 2/2. Its function is as follows. Thiolesterase that catalyzes the hydrolysis of S-D-lactoyl-glutathione to form glutathione and D-lactic acid. This chain is Hydroxyacylglutathione hydrolase, found in Citrobacter koseri (strain ATCC BAA-895 / CDC 4225-83 / SGSC4696).